A 185-amino-acid chain; its full sequence is MKMIVGLGNIGRQYAQTRHNVGFMIVDELASKLNVTFQTSKFEAQVATAFQDGEKILLVKPATYMNDSGRAVGPLMSYYNVDPADLLVIHDDLDLPLGKVRLKQKGSAGGHNGIKSIISHVGDQHFKRVKVGIDHPQKMSVVDYVLGKFTPAEVAKFDDAKITALAAVEAWLANDDFTAVMNQYN.

Tyrosine 14 contributes to the tRNA binding site. The active-site Proton acceptor is histidine 19. 3 residues coordinate tRNA: tyrosine 64, asparagine 66, and asparagine 112.

This sequence belongs to the PTH family. As to quaternary structure, monomer.

Its subcellular location is the cytoplasm. It carries out the reaction an N-acyl-L-alpha-aminoacyl-tRNA + H2O = an N-acyl-L-amino acid + a tRNA + H(+). In terms of biological role, hydrolyzes ribosome-free peptidyl-tRNAs (with 1 or more amino acids incorporated), which drop off the ribosome during protein synthesis, or as a result of ribosome stalling. Its function is as follows. Catalyzes the release of premature peptidyl moieties from peptidyl-tRNA molecules trapped in stalled 50S ribosomal subunits, and thus maintains levels of free tRNAs and 50S ribosomes. The polypeptide is Peptidyl-tRNA hydrolase (Lactiplantibacillus plantarum (strain ATCC BAA-793 / NCIMB 8826 / WCFS1) (Lactobacillus plantarum)).